We begin with the raw amino-acid sequence, 370 residues long: Protein RecA (370 aa).

The disordered stretch occupies residues 1 to 20 (MSFEERRKKDSKESSSKEKD). Residue 78 to 85 (GPESSGKT) coordinates ATP.

The protein belongs to the RecA family.

It is found in the cytoplasm. Can catalyze the hydrolysis of ATP in the presence of single-stranded DNA, the ATP-dependent uptake of single-stranded DNA by duplex DNA, and the ATP-dependent hybridization of homologous single-stranded DNAs. It interacts with LexA causing its activation and leading to its autocatalytic cleavage. In Prochlorococcus marinus (strain MIT 9515), this protein is Protein RecA.